A 210-amino-acid polypeptide reads, in one-letter code: Cytochrome c biogenesis ATP-binding export protein CcmA (210 aa).

The ABC transporter domain occupies 1–208 (MHLNQLVISH…KVRTLSLDQF (208 aa)). 38-45 (GHNGIGKT) is a binding site for ATP.

Belongs to the ABC transporter superfamily. CcmA exporter (TC 3.A.1.107) family. As to quaternary structure, the complex is composed of two ATP-binding proteins (CcmA) and two transmembrane proteins (CcmB).

The protein localises to the cell inner membrane. The catalysed reaction is heme b(in) + ATP + H2O = heme b(out) + ADP + phosphate + H(+). Part of the ABC transporter complex CcmAB involved in the biogenesis of c-type cytochromes; once thought to export heme, this seems not to be the case, but its exact role is uncertain. Responsible for energy coupling to the transport system. The chain is Cytochrome c biogenesis ATP-binding export protein CcmA from Haemophilus ducreyi (strain 35000HP / ATCC 700724).